A 742-amino-acid chain; its full sequence is Clamp-binding protein CrfC (742 aa).

Positions 41-45 are clamp-binding consensus; that stretch reads QLALP. A Dynamin-type G domain is found at 66-402; it reads SRLEMVLAIV…LWEDSLFAQP (337 aa). Residues 76–83 are G1 motif; sequence GTMKAGKS. Residues 102-104 are G2 motif; it reads MTA. The segment at 236–239 is G3 motif; it reads DTPG. The segment at 297–300 is G4 motif; that stretch reads NKFD. The G5 motif stretch occupies residues 331–334; it reads FPVS. Residues 440–472 are a coiled coil; that stretch reads RAHGLNVACEQLRQNIHQVEESLQLLQLNQAQV.

Belongs to the TRAFAC class dynamin-like GTPase superfamily. Dynamin/Fzo/YdjA family. Forms homooligomers. Binds to the beta sliding clamp processivity factor (DnaN) in the presence and absence of DNA, may bind to the clamp itself as homodimers or trimers. Homooligomers may be able to bind more than 1 clamp complex.

Its subcellular location is the cytoplasm. In terms of biological role, important for the colocalization of sister nascent DNA strands after replication fork passage during DNA replication, and for positioning and subsequent partitioning of sister chromosomes. Does not have GTPase activity on its own. This chain is Clamp-binding protein CrfC (crfC), found in Escherichia coli.